Here is a 149-residue protein sequence, read N- to C-terminus: Acyl carrier protein 1, chloroplastic (149 aa).

The N-terminal 59 residues, 1-59 (MAHCLAAVSSFSPSAVRRRLSSQVANVVSSRSSVSFHSRQMSFVSISSRPSSLRFKICC), are a transit peptide targeting the chloroplast. A Carrier domain is found at 69–144 (KETVDKVCMI…DAANLIEKLV (76 aa)). S104 is modified (O-(pantetheine 4'-phosphoryl)serine).

The protein belongs to the acyl carrier protein (ACP) family. In terms of processing, 4'-phosphopantetheine is transferred from CoA to a specific serine of apo-ACP by acpS. This modification is essential for activity because fatty acids are bound in thioester linkage to the sulfhydryl of the prosthetic group.

The protein localises to the plastid. The protein resides in the chloroplast. It functions in the pathway lipid metabolism; fatty acid biosynthesis. Functionally, carrier of the growing fatty acid chain in fatty acid biosynthesis. The polypeptide is Acyl carrier protein 1, chloroplastic (ACL1.1) (Hordeum vulgare (Barley)).